A 189-amino-acid polypeptide reads, in one-letter code: UPF0149 protein VSAL_I2539 (189 aa).

This sequence belongs to the UPF0149 family.

In Aliivibrio salmonicida (strain LFI1238) (Vibrio salmonicida (strain LFI1238)), this protein is UPF0149 protein VSAL_I2539.